Consider the following 499-residue polypeptide: Guanosine-5'-triphosphate,3'-diphosphate pyrophosphatase (499 aa).

Belongs to the GppA/Ppx family. GppA subfamily.

The catalysed reaction is guanosine 3'-diphosphate 5'-triphosphate + H2O = guanosine 3',5'-bis(diphosphate) + phosphate + H(+). It functions in the pathway purine metabolism; ppGpp biosynthesis; ppGpp from GTP: step 2/2. In terms of biological role, catalyzes the conversion of pppGpp to ppGpp. Guanosine pentaphosphate (pppGpp) is a cytoplasmic signaling molecule which together with ppGpp controls the 'stringent response', an adaptive process that allows bacteria to respond to amino acid starvation, resulting in the coordinated regulation of numerous cellular activities. This chain is Guanosine-5'-triphosphate,3'-diphosphate pyrophosphatase, found in Sodalis glossinidius (strain morsitans).